The sequence spans 250 residues: NAD-dependent protein deacetylase (250 aa).

The Deacetylase sirtuin-type domain maps to Met1–Gln244. 8 residues coordinate NAD(+): Ala22, Thr26, Phe33, Arg34, Gln98, Ile100, Asp101, and His116. Phe33 contacts nicotinamide. Residues Ile100 and Asp101 each coordinate nicotinamide. His116 functions as the Proton acceptor in the catalytic mechanism. 4 residues coordinate Zn(2+): Cys124, Cys127, Cys149, and Cys151. Positions 187, 188, 212, and 230 each coordinate NAD(+).

This sequence belongs to the sirtuin family. Class U subfamily. Requires Zn(2+) as cofactor.

Its subcellular location is the cytoplasm. It carries out the reaction N(6)-acetyl-L-lysyl-[protein] + NAD(+) + H2O = 2''-O-acetyl-ADP-D-ribose + nicotinamide + L-lysyl-[protein]. NAD-dependent protein deacetylase which modulates the activities of several enzymes which are inactive in their acetylated form. Deacetylates the N-terminal lysine residue of Alba, the major archaeal chromatin protein and that, in turn, increases Alba's DNA binding affinity, thereby repressing transcription. This chain is NAD-dependent protein deacetylase, found in Sulfurisphaera tokodaii (strain DSM 16993 / JCM 10545 / NBRC 100140 / 7) (Sulfolobus tokodaii).